The chain runs to 297 residues: Homoserine kinase (297 aa).

82 to 92 (PVSRGLGSSAA) is a binding site for ATP.

This sequence belongs to the GHMP kinase family. Homoserine kinase subfamily.

The protein localises to the cytoplasm. The enzyme catalyses L-homoserine + ATP = O-phospho-L-homoserine + ADP + H(+). It functions in the pathway amino-acid biosynthesis; L-threonine biosynthesis; L-threonine from L-aspartate: step 4/5. Functionally, catalyzes the ATP-dependent phosphorylation of L-homoserine to L-homoserine phosphate. The chain is Homoserine kinase from Clostridium botulinum (strain Loch Maree / Type A3).